Here is a 201-residue protein sequence, read N- to C-terminus: Large ribosomal subunit protein bL25 (201 aa).

This sequence belongs to the bacterial ribosomal protein bL25 family. CTC subfamily. As to quaternary structure, part of the 50S ribosomal subunit; part of the 5S rRNA/L5/L18/L25 subcomplex. Contacts the 5S rRNA. Binds to the 5S rRNA independently of L5 and L18.

Its function is as follows. This is one of the proteins that binds to the 5S RNA in the ribosome where it forms part of the central protuberance. This is Large ribosomal subunit protein bL25 from Akkermansia muciniphila (strain ATCC BAA-835 / DSM 22959 / JCM 33894 / BCRC 81048 / CCUG 64013 / CIP 107961 / Muc).